Here is a 155-residue protein sequence, read N- to C-terminus: Small ribosomal subunit protein uS7cz/uS7cy (155 aa).

The protein belongs to the universal ribosomal protein uS7 family. In terms of assembly, part of the 30S ribosomal subunit.

It localises to the plastid. The protein localises to the chloroplast. One of the primary rRNA binding proteins, it binds directly to 16S rRNA where it nucleates assembly of the head domain of the 30S subunit. In Acorus calamus var. americanus (American sweet flag), this protein is Small ribosomal subunit protein uS7cz/uS7cy (rps7-A).